A 215-amino-acid chain; its full sequence is MLQVFLVRHGETVWNASRQIQGQSDSPLTAVGERQAHLVAQRVRSQGITHIITSDLGRTQQTAKIIADACGLKVVTDPRLRELNMGVLETRPIESLTPEEEQWRKQMINGTEGGRIPEGESMAELGRRMRAALDSCLELPAGSKPLLVSHGMALGCLLSTLLGLPPHAERRLRLRNCSLSRVDYQESPWLASGWVIESAGDTAHLDMPALDELQR.

Substrate-binding positions include 8–15, 21–22, Arg-58, 82–85, and 151–152; these read RHGETVWN, QG, ELNM, and GM. His-9 functions as the Tele-phosphohistidine intermediate in the catalytic mechanism. Glu-82 serves as the catalytic Proton donor/acceptor.

The protein belongs to the phosphoglycerate mutase family. GpmB subfamily.

It catalyses the reaction (2R)-2-phosphoglycerate = (2R)-3-phosphoglycerate. Its pathway is carbohydrate degradation; glycolysis; pyruvate from D-glyceraldehyde 3-phosphate: step 3/5. The protein is Probable phosphoglycerate mutase GpmB of Yersinia enterocolitica serotype O:8 / biotype 1B (strain NCTC 13174 / 8081).